A 253-amino-acid chain; its full sequence is Octanoyltransferase (253 aa).

The region spanning 47-236 is the BPL/LPL catalytic domain; the sequence is PETPDQVWLV…ALCEVLAARE (190 aa). Residues 87–94, 159–161, and 172–174 each bind substrate; these read RGGQITYH, ALG, and GVS. Cys190 functions as the Acyl-thioester intermediate in the catalytic mechanism.

This sequence belongs to the LipB family.

It localises to the cytoplasm. The enzyme catalyses octanoyl-[ACP] + L-lysyl-[protein] = N(6)-octanoyl-L-lysyl-[protein] + holo-[ACP] + H(+). The protein operates within protein modification; protein lipoylation via endogenous pathway; protein N(6)-(lipoyl)lysine from octanoyl-[acyl-carrier-protein]: step 1/2. Its function is as follows. Catalyzes the transfer of endogenously produced octanoic acid from octanoyl-acyl-carrier-protein onto the lipoyl domains of lipoate-dependent enzymes. Lipoyl-ACP can also act as a substrate although octanoyl-ACP is likely to be the physiological substrate. The protein is Octanoyltransferase of Cupriavidus pinatubonensis (strain JMP 134 / LMG 1197) (Cupriavidus necator (strain JMP 134)).